Here is a 418-residue protein sequence, read N- to C-terminus: CinA-like protein (418 aa).

This sequence belongs to the CinA family.

The chain is CinA-like protein from Flavobacterium psychrophilum (strain ATCC 49511 / DSM 21280 / CIP 103535 / JIP02/86).